Here is a 265-residue protein sequence, read N- to C-terminus: C-type lectin domain family 12 member A (265 aa).

The Cytoplasmic portion of the chain corresponds to 1–43 (MSEEVTYADLQFQNSSEMEKIPEIGKFGEKAPPAPSHVWRPAA). Positions 5-10 (VTYADL) match the ITIM motif motif. Position 7 is a phosphotyrosine (Tyr-7). Residues 44–64 (LFLTLLCLLLLIGLGVLASMF) form a helical; Signal-anchor for type II membrane protein membrane-spanning segment. The Extracellular segment spans residues 65-265 (HVTLKIEMKK…QLGSTYFREA (201 aa)). N-linked (GlcNAc...) asparagine glycosylation is found at Asn-88 and Asn-98. Disulfide bonds link Cys-118-Cys-130, Cys-133-Cys-144, Cys-161-Cys-248, and Cys-227-Cys-240. One can recognise a C-type lectin domain in the interval 140–249 (HKDSCYFLSD…CTYKKRMICE (110 aa)). N-linked (GlcNAc...) asparagine glycosylation occurs at Asn-165.

As to quaternary structure, homodimer; disulfide-linked. Interacts (when the ITIM motif is phosphorylated) with PTPN6 and PTPN11. Phosphorylated at Tyr-7 by SRC in the ITIM motif following ligand-binding, promoting recruitment of tyrosine-protein phosphatases PTPN6 and PTPN11. In terms of processing, highly N-glycosylated; glycosylation varies between cell types. Preferentially expressed in lymphoid tissues and immune cells, including natural killer (NK) cells, T-cells, dendritic cells and monocytes or macrophages. Detected in spleen macrophage-rich red pulp and in lymph node (at protein level). Detected in peripheral blood leukocytes, dendritic cells, bone marrow, monocytes, mononuclear leukocytes and macrophages.

It is found in the cell membrane. Functionally, myeloid inhibitory C-type lectin receptor that acts as a negative regulator of myeloid cell activation. Myeloid cell inhibition is required to limit proinflammatory pathways and protect against excessive inflammation. Specifically recognizes and binds various structures, such as neutrophil extracellular traps (NETs) or monosodium urate crystals. Also acts as a pattern-recognition receptor for pathogen-associated molecules, such as plasmodium hemozoin or mycobacterial micolic acid. Ligand-binding induces phosphorylation of its ITIM motif, followed by recruitment of tyrosine-protein phosphatases PTPN6 and PTPN11, which counteract tyrosine-protein kinase SYK, thereby preventing myeloid cell activation. Acts as a pattern-recognition receptor for NETs in neutrophils: specifically recognizes DNA in NETs, leading to inhibit neutrophil activation and limit further NET formation. This regulation is essential for controlling key neutrophil responses and limit NET-mediated inflammatory conditions. Also recognizes dead cells by acting as a receptor for monosodium urate crystals, leading to down-regulate neutrophil activation. Binding to monosodium urate crystals also promotes the type I interferon response. Acts as an inhibitor of natural killer (NK) cell cytotoxicity. Also acts as an ihibitor of dendritic cell maturation in an IL10-dependent manner. This Homo sapiens (Human) protein is C-type lectin domain family 12 member A.